A 1235-amino-acid polypeptide reads, in one-letter code: N-acetylglucosamine-1-phosphotransferase subunits alpha/beta (1235 aa).

A helical membrane pass occupies residues 22 to 42; that stretch reads VCFVGVVVTIVSAFQFGEVVL. N-linked (GlcNAc...) asparagine glycosylation is found at asparagine 83, asparagine 114, asparagine 148, and asparagine 179. Disulfide bonds link cysteine 438/cysteine 461, cysteine 452/cysteine 468, cysteine 505/cysteine 528, and cysteine 519/cysteine 535. LNR repeat units lie at residues 438–473 and 505–545; these read CAEGCPGSWIKDGYCDKACNNSACDWDGGDCSGNTA and CNQG…ELYK. Ca(2+)-binding residues include aspartate 449, aspartate 464, aspartate 467, aspartate 516, aspartate 531, and aspartate 534. 2 N-linked (GlcNAc...) asparagine glycosylation sites follow: asparagine 614 and asparagine 729. Residues 699–823 form the DMAP1-binding domain; it reads NISLLPKEAQ…AQPTLGVTVS (125 aa). Disordered regions lie at residues 751 to 783 and 830 to 850; these read QARTDETKGNLEVPQENPSHRRPHGFAGEHRSE and LIVPPESHLPKEEESDRAEGN. Residues 837-848 are compositionally biased toward basic and acidic residues; the sequence is HLPKEEESDRAE. The EF-hand domain occupies 984-1019; it reads VQPLNISQVFHEVDTDQSGVLSDREIRTLATRIHDL. Asparagine 988 is a glycosylation site (N-linked (GlcNAc...) asparagine). The Ca(2+) site is built by aspartate 997, aspartate 999, serine 1001, and glutamate 1008. N-linked (GlcNAc...) asparagine glycosylation is present at asparagine 1108. A helical membrane pass occupies residues 1194–1214; the sequence is VLATLIIFTIFSFFAEQIIAL.

This sequence belongs to the stealth family. As to quaternary structure, hexamer of two alpha, two beta and two gamma (GNPTG) subunits; disulfide-linked. The alpha and/or the beta subunits of the enzyme constitute the catalytic subunits. Interacts with LYSET; facilitates proper localization of GNPTAB. In terms of processing, the alpha- and beta-subunits are generated by a proteolytic cleavage by MBTPS1 protease at the Lys-907-Asp-908 bond.

The protein resides in the golgi apparatus membrane. It carries out the reaction N(4)-[alpha-D-mannosyl-(1-&gt;2)-alpha-D-mannosyl-(glycan)]-L-asparaginyl-[protein] + UDP-N-acetyl-alpha-D-glucosamine = N(4)-[6-(N-acetyl-alpha-D-glucosaminyl-1-phospho)-alpha-D-mannosyl-(1-&gt;2)-alpha-D-mannosyl-(glycan)]-L-asparaginyl-[protein] + UMP + H(+). Catalyzes the formation of mannose 6-phosphate (M6P) markers on high mannose type oligosaccharides in the Golgi apparatus. M6P residues are required to bind to the M6P receptors (MPR), which mediate the vesicular transport of lysosomal enzymes to the endosomal/prelysosomal compartment. This Mus musculus (Mouse) protein is N-acetylglucosamine-1-phosphotransferase subunits alpha/beta (Gnptab).